Reading from the N-terminus, the 60-residue chain is Cytochrome c oxidase assembly protein COX14 homolog (60 aa).

A helical membrane pass occupies residues 10–32; sequence VGYRLFSGSMMLLTVYGGYLCVV.

The protein resides in the mitochondrion membrane. Plays a role in the assembly or stability of the cytochrome c oxidase complex (COX). The polypeptide is Cytochrome c oxidase assembly protein COX14 homolog (Danio rerio (Zebrafish)).